A 185-amino-acid chain; its full sequence is MINEIKQDSEKRMKKTIEALHTDMSKIRTGRANASLLDHVMVDYYGSPTPLSQVANITTSDSRTILVTPWEKSMVAAIEKAILNSDLGLNPATAGTAIRVPMPPLTEERRKELIKVVRHEGEQGRVSIRNIRRDANNQLKELVKEKAISEDDERRAAEAIQKLTDRYISEVDAVLAEKEKDLMEI.

It belongs to the RRF family.

It is found in the cytoplasm. Responsible for the release of ribosomes from messenger RNA at the termination of protein biosynthesis. May increase the efficiency of translation by recycling ribosomes from one round of translation to another. This chain is Ribosome-recycling factor, found in Legionella pneumophila (strain Corby).